Consider the following 355-residue polypeptide: MRVSDFTFELPDEMIAHYPQPQRSGCRLLSLDGETGALTHGIFTDVLDKLNAGDLLVFNNTRVIPARIFGRKATGGKLEVLVERVLDDKRVLAHVRASKAPKEGTELLLGDNESLKATMLARHDTLFEIRFDDERDVLSILDDIGHMPLPPYINRPDEEADRELYQTVYSERPGAVAAPTAGLHFDEPLLEALRKKGVEMVFVTLHVGAGTFQPVRVETIEDHIMHAEYAEVPQDVVDAVLACKARGNKVVAVGTTSVRSLESAAKACQDELIAPFFNDTQIFIYPGFEYQVVDALITNFHLPESTLIMLVSAFAGYKNTMNAYQEAVAEKYRFFSYGDAMFIRRNPFACKEKIS.

It belongs to the QueA family. In terms of assembly, monomer.

The protein resides in the cytoplasm. The catalysed reaction is 7-aminomethyl-7-carbaguanosine(34) in tRNA + S-adenosyl-L-methionine = epoxyqueuosine(34) in tRNA + adenine + L-methionine + 2 H(+). Its pathway is tRNA modification; tRNA-queuosine biosynthesis. Transfers and isomerizes the ribose moiety from AdoMet to the 7-aminomethyl group of 7-deazaguanine (preQ1-tRNA) to give epoxyqueuosine (oQ-tRNA). This chain is S-adenosylmethionine:tRNA ribosyltransferase-isomerase, found in Photorhabdus laumondii subsp. laumondii (strain DSM 15139 / CIP 105565 / TT01) (Photorhabdus luminescens subsp. laumondii).